The primary structure comprises 218 residues: Adenylate kinase (218 aa).

10–15 is a binding site for ATP; sequence GAGKGT. Residues 30-59 are NMP; sequence STGDMLRAAIAKGTPLGLSAQKIMESGGLV. AMP is bound by residues Thr-31, Arg-36, 57 to 59, 85 to 88, and Gln-92; these read GLV and GFPR. The segment at 122 to 159 is LID; the sequence is GRRIHQPSGRVYHVVNQPPKNPGVDDITGEPLIQRDDD. ATP is bound by residues Arg-123 and 132 to 133; that span reads VY. Residues Arg-156 and Arg-167 each contribute to the AMP site. Gly-203 lines the ATP pocket.

This sequence belongs to the adenylate kinase family. As to quaternary structure, monomer.

The protein resides in the cytoplasm. The enzyme catalyses AMP + ATP = 2 ADP. The protein operates within purine metabolism; AMP biosynthesis via salvage pathway; AMP from ADP: step 1/1. Functionally, catalyzes the reversible transfer of the terminal phosphate group between ATP and AMP. Plays an important role in cellular energy homeostasis and in adenine nucleotide metabolism. This chain is Adenylate kinase, found in Legionella pneumophila (strain Lens).